The chain runs to 158 residues: Small ribosomal subunit protein uS9 (158 aa).

This sequence belongs to the universal ribosomal protein uS9 family.

The sequence is that of Small ribosomal subunit protein uS9 from Brucella abortus (strain S19).